Here is a 440-residue protein sequence, read N- to C-terminus: Thymidine phosphorylase (440 aa).

Belongs to the thymidine/pyrimidine-nucleoside phosphorylase family. In terms of assembly, homodimer.

It catalyses the reaction thymidine + phosphate = 2-deoxy-alpha-D-ribose 1-phosphate + thymine. It functions in the pathway pyrimidine metabolism; dTMP biosynthesis via salvage pathway; dTMP from thymine: step 1/2. Functionally, the enzymes which catalyze the reversible phosphorolysis of pyrimidine nucleosides are involved in the degradation of these compounds and in their utilization as carbon and energy sources, or in the rescue of pyrimidine bases for nucleotide synthesis. This chain is Thymidine phosphorylase, found in Klebsiella pneumoniae subsp. pneumoniae (strain ATCC 700721 / MGH 78578).